Consider the following 187-residue polypeptide: UPF0301 protein GOX1459 (187 aa).

Belongs to the UPF0301 (AlgH) family.

This Gluconobacter oxydans (strain 621H) (Gluconobacter suboxydans) protein is UPF0301 protein GOX1459.